The following is a 203-amino-acid chain: MGAEKITSKIVEDANKNAEKILAEALNEKEAILTEAKEEASKKEQAIAKKGEKDAEMTKNRILAEARLSAKKKLLEEREKTIQLTLEKLEEDLVKLPQKEDYKDILLKLIISGVYSVGGGELELLLNKKDFELIDDSTLWALEKEMEDRLKKVTVLKKGEAKSIIGGCIIKTADQTKVSDNSLEATFERNLDSVRAKIAEMLF.

The protein belongs to the V-ATPase E subunit family. As to quaternary structure, has multiple subunits with at least A(3), B(3), C, D, E, F, H, I and proteolipid K(x).

The protein localises to the cell membrane. In terms of biological role, component of the A-type ATP synthase that produces ATP from ADP in the presence of a proton gradient across the membrane. The sequence is that of A-type ATP synthase subunit E from Methanococcus maripaludis (strain DSM 14266 / JCM 13030 / NBRC 101832 / S2 / LL).